The following is a 787-amino-acid chain: Integrin beta-6 (787 aa).

The signal sequence occupies residues 1–21 (MGIELVCLFLLLLGRNDHVQG). In terms of domain architecture, PSI spans 22–71 (GCAWSGAETCSDCLLTGPHCAWCSQENFTHLSGAGERCDTPENLLAKGCQ). At 22 to 708 (GCAWSGAETC…KDCPKPPNIP (687 aa)) the chain is on the extracellular side. Intrachain disulfides connect Cys-23/Cys-41, Cys-31/Cys-454, Cys-34/Cys-59, Cys-44/Cys-70, Cys-197/Cys-204, Cys-252/Cys-293, Cys-394/Cys-406, Cys-426/Cys-452, Cys-456/Cys-476, Cys-467/Cys-479, Cys-481/Cys-490, Cys-492/Cys-519, Cys-502/Cys-517, Cys-511/Cys-522, Cys-524/Cys-537, Cys-539/Cys-560, Cys-544/Cys-558, Cys-552/Cys-563, and Cys-565/Cys-574. Residues Asn-48 and Asn-97 are each glycosylated (N-linked (GlcNAc...) asparagine). A VWFA domain is found at 131–371 (YPVDLYYLMD…QLIISAYEEL (241 aa)). Residues Asp-140, Ser-142, and Ser-144 each contribute to the Mg(2+) site. Ca(2+) is bound by residues Ser-144, Asp-147, Asp-148, and Glu-179. Ca(2+) is bound by residues Asn-235, Asp-237, Pro-239, and Glu-240. Glu-240 provides a ligand contact to Mg(2+). N-linked (GlcNAc...) asparagine glycosylation is present at Asn-260. Ca(2+)-binding residues include Asp-271 and Lys-355. An N-linked (GlcNAc...) asparagine glycan is attached at Asn-387. An N-linked (GlcNAc...) asparagine glycan is attached at Asn-418. I-EGF domains follow at residues 456-491 (CQRE…PRCE), 492-538 (CGED…PYCQ), 539-575 (CDNF…EYCN), and 576-615 (CTTS…PTCE). Asn-463 and Asn-471 each carry an N-linked (GlcNAc...) asparagine glycan. N-linked (GlcNAc...) asparagine glycosylation is present at Asn-541. N-linked (GlcNAc...) asparagine glycosylation is present at Asn-575. 9 disulfide bridges follow: Cys-576–Cys-599, Cys-583–Cys-597, Cys-591–Cys-602, Cys-604–Cys-614, Cys-617–Cys-620, Cys-624–Cys-669, Cys-630–Cys-649, Cys-633–Cys-645, and Cys-677–Cys-701. The N-linked (GlcNAc...) asparagine glycan is linked to Asn-695. A helical transmembrane segment spans residues 709-729 (MIMLGVSLAILLIGVVLLCIW). The segment at 730–757 (KLLVSFHDRKEVAKFEAERSKAKWQTGT) is interaction with HAX1. Residues 730–787 (KLLVSFHDRKEVAKFEAERSKAKWQTGTNPLYRGSTSTFKNVTYKHREKHKVGLSSDG) lie on the Cytoplasmic side of the membrane.

Belongs to the integrin beta chain family. In terms of assembly, heterodimer of an alpha and a beta subunit. Interacts with FLNB. Interacts with HAX1. ITGAV:ITGB6 interacts with FBN1. ITGAV:ITGB6 interacts with TGFB1.

It is found in the cell membrane. It localises to the cell junction. The protein localises to the focal adhesion. In terms of biological role, integrin alpha-V:beta-6 (ITGAV:ITGB6) is a receptor for fibronectin and cytotactin. It recognizes the sequence R-G-D in its ligands. ITGAV:ITGB6 acts as a receptor for fibrillin-1 (FBN1) and mediates R-G-D-dependent cell adhesion to FBN1. Integrin alpha-V:beta-6 (ITGAV:ITGB6) mediates R-G-D-dependent release of transforming growth factor beta-1 (TGF-beta-1) from regulatory Latency-associated peptide (LAP), thereby playing a key role in TGF-beta-1 activation. The sequence is that of Integrin beta-6 (Itgb6) from Rattus norvegicus (Rat).